The chain runs to 934 residues: Bifunctional uridylyltransferase/uridylyl-removing enzyme (934 aa).

The uridylyltransferase stretch occupies residues 1–379; sequence MSAHDLKLEE…TFSRRKRKLS (379 aa). The uridylyl-removing stretch occupies residues 380–736; sequence DDGAFISENH…AKPHAFEAVT (357 aa). Residues 496 to 613 form the HD domain; the sequence is VDEHLLRCIA…IDFADTVQTM (118 aa). 2 ACT domains span residues 737 to 818 and 848 to 931; these read EITV…DMLA and VIEV…RSPQ.

This sequence belongs to the GlnD family. It depends on Mg(2+) as a cofactor.

It catalyses the reaction [protein-PII]-L-tyrosine + UTP = [protein-PII]-uridylyl-L-tyrosine + diphosphate. The catalysed reaction is [protein-PII]-uridylyl-L-tyrosine + H2O = [protein-PII]-L-tyrosine + UMP + H(+). Its activity is regulated as follows. Uridylyltransferase (UTase) activity is inhibited by glutamine, while glutamine activates uridylyl-removing (UR) activity. Its function is as follows. Modifies, by uridylylation and deuridylylation, the PII regulatory proteins (GlnB and homologs), in response to the nitrogen status of the cell that GlnD senses through the glutamine level. Under low glutamine levels, catalyzes the conversion of the PII proteins and UTP to PII-UMP and PPi, while under higher glutamine levels, GlnD hydrolyzes PII-UMP to PII and UMP (deuridylylation). Thus, controls uridylylation state and activity of the PII proteins, and plays an important role in the regulation of nitrogen assimilation and metabolism. In Brucella suis (strain ATCC 23445 / NCTC 10510), this protein is Bifunctional uridylyltransferase/uridylyl-removing enzyme.